Here is a 384-residue protein sequence, read N- to C-terminus: Outer membrane protein assembly factor BamC (384 aa).

Positions 1 to 23 (MNKLNSVVVARGAVAVLLIGLAG) are cleaved as a signal peptide. Cys24 carries the N-palmitoyl cysteine lipid modification. Residue Cys24 is the site of S-diacylglycerol cysteine attachment. Disordered regions lie at residues 47–70 (LEVP…TSGK) and 251–273 (QAAQ…SGTL).

This sequence belongs to the BamC family. Part of the Bam complex.

It is found in the cell outer membrane. Its function is as follows. Part of the outer membrane protein assembly complex, which is involved in assembly and insertion of beta-barrel proteins into the outer membrane. The protein is Outer membrane protein assembly factor BamC of Accumulibacter regalis.